Here is a 142-residue protein sequence, read N- to C-terminus: Ribosome-binding factor A (142 aa).

Positions 119-142 (ETLGEVQSESDQPTTDETTTVNKT) are disordered. Polar residues predominate over residues 123–142 (EVQSESDQPTTDETTTVNKT).

Belongs to the RbfA family. Monomer. Binds 30S ribosomal subunits, but not 50S ribosomal subunits or 70S ribosomes.

Its subcellular location is the cytoplasm. Its function is as follows. One of several proteins that assist in the late maturation steps of the functional core of the 30S ribosomal subunit. Associates with free 30S ribosomal subunits (but not with 30S subunits that are part of 70S ribosomes or polysomes). Required for efficient processing of 16S rRNA. May interact with the 5'-terminal helix region of 16S rRNA. This chain is Ribosome-binding factor A, found in Prochlorococcus marinus (strain MIT 9303).